The chain runs to 236 residues: Sensory rhodopsin II (236 aa).

7 consecutive transmembrane segments (helical) span residues 4 to 24, 38 to 58, 73 to 93, 101 to 121, 122 to 142, 167 to 187, and 196 to 216; these read ITTWFTLGLLGELLGTAVLAY, LLLIAIPGIAIVAYALMALGF, YVDWLLTTPLNVWFLALLAGA, LVVLQALTIVFGFAGAVTPSP, VSYALFAVGGALFGGVIYLLY, FVVVLWLVYPVVWLLGAAGVG, and LVVVYLDVVTKVGFGVIALLA. The residue at position 206 (lysine 206) is an N6-(retinylidene)lysine.

This sequence belongs to the archaeal/bacterial/fungal opsin family. In terms of processing, the covalent binding of retinal to the apoprotein, bacterioopsin, generates bacteriorhodopsin.

It is found in the membrane. In terms of biological role, mediates the photorepellent response. This Haloarcula marismortui (strain ATCC 43049 / DSM 3752 / JCM 8966 / VKM B-1809) (Halobacterium marismortui) protein is Sensory rhodopsin II (sop2).